The chain runs to 204 residues: Quinol oxidase subunit 3 (204 aa).

5 consecutive transmembrane segments (helical) span residues 27-47 (FWIFLGAEIVLFSTLFATFFV), 66-86 (LVMIMTFLLLISSFTCGIAVH), 95-115 (GVVIWTIITLLLGAGFVGCEI), 140-160 (LLGTHGTHVTIGIFWIIGILI), and 184-204 (FLDVVWIFIFTGVYLMGLGGL).

Belongs to the cytochrome c oxidase subunit 3 family.

It localises to the cell membrane. It catalyses the reaction 2 a quinol + O2 = 2 a quinone + 2 H2O. Its function is as follows. Catalyzes quinol oxidation with the concomitant reduction of oxygen to water. Major component for energy conversion during vegetative growth. In Bacillus spizizenii (strain ATCC 23059 / NRRL B-14472 / W23) (Bacillus subtilis subsp. spizizenii), this protein is Quinol oxidase subunit 3 (qoxC).